Here is a 136-residue protein sequence, read N- to C-terminus: UPF0216 protein PF0452 (136 aa).

It belongs to the UPF0216 family.

This chain is UPF0216 protein PF0452, found in Pyrococcus furiosus (strain ATCC 43587 / DSM 3638 / JCM 8422 / Vc1).